We begin with the raw amino-acid sequence, 468 residues long: 6-phospho-beta-galactosidase (468 aa).

D-galactose 6-phosphate is bound by residues Gln19, His116, Asn159, Glu160, and Asn297. The active-site Proton donor is the Glu160. Glu375 functions as the Nucleophile in the catalytic mechanism. Ser428, Trp429, Lys435, and Tyr437 together coordinate D-galactose 6-phosphate.

Belongs to the glycosyl hydrolase 1 family.

The catalysed reaction is a 6-phospho-beta-D-galactoside + H2O = D-galactose 6-phosphate + an alcohol. Its pathway is carbohydrate metabolism; lactose degradation; D-galactose 6-phosphate and beta-D-glucose from lactose 6-phosphate: step 1/1. The protein is 6-phospho-beta-galactosidase of Streptococcus pyogenes serotype M6 (strain ATCC BAA-946 / MGAS10394).